We begin with the raw amino-acid sequence, 182 residues long: Putative manganese efflux pump MntP (182 aa).

A run of 6 helical transmembrane segments spans residues 6–26 (LIPL…VSLG), 37–57 (ILYI…IGMV), 71–91 (HFAG…SSIL), 101–121 (IGIS…SVGL), 131–151 (IITI…GLFI), and 162–182 (YGEI…LFPI).

This sequence belongs to the MntP (TC 9.B.29) family.

The protein localises to the cell membrane. Its function is as follows. Probably functions as a manganese efflux pump. This chain is Putative manganese efflux pump MntP, found in Bacillus cereus (strain ATCC 10987 / NRS 248).